The following is a 156-amino-acid chain: Phosphopantetheine adenylyltransferase (156 aa).

Thr-10 serves as a coordination point for substrate. Residues 10 to 11 (TF) and His-18 contribute to the ATP site. Residues Lys-42, Leu-74, and Arg-88 each contribute to the substrate site. ATP is bound by residues 89–91 (GLR), Glu-99, and 124–130 (NAFISSS).

Belongs to the bacterial CoaD family. In terms of assembly, homohexamer. Mg(2+) is required as a cofactor.

The protein localises to the cytoplasm. It catalyses the reaction (R)-4'-phosphopantetheine + ATP + H(+) = 3'-dephospho-CoA + diphosphate. Its pathway is cofactor biosynthesis; coenzyme A biosynthesis; CoA from (R)-pantothenate: step 4/5. Functionally, reversibly transfers an adenylyl group from ATP to 4'-phosphopantetheine, yielding dephospho-CoA (dPCoA) and pyrophosphate. This chain is Phosphopantetheine adenylyltransferase, found in Campylobacter concisus (strain 13826).